The chain runs to 765 residues: MTVSPTSAPTQAIDTVERAATTPDEPQPFGELGLKDDEYQRIREILGRRPTDTELAMYSVMWSEHCSYKSSKVHLRYFGETTTDEMRAGMLAGIGENAGVVDIGDGWAVTFKVESHNHPSYVEPYQGAATGVGGIVRDIMAMGARPVAVMDQLRFGAADAPDTRRVLDGVVRGIGGYGNSLGLPNIGGETVFDACYAGNPLVNAMCVGVLRQEDLHLAFASGAGNKIILFGARTGLDGIGGVSVLASDTFDAENSRKKLPSVQVGDPFMEKVLIECCLELYAGGLVIGIQDLGGAGLACATSELASAGDGGMEVRLEAVPLRTAGMTPAEVLCSESQERMCAVVTPENVDAFLAVCRKWDVLATVIGEVTDGDRLRITWHGQTVVDVPPRTVAHEGPVYQRPLARPDTQDALNADSSARLPRPATGAELRATLLALLGSPHLCSRAFITEQYDRYVRGNTVLAEHADGGVLRVDETTGRGIAVSTDASGRYTMLDPYAGAQLALAEAYRNVAVTGATPVAVTNCLNFGSPEDPAVMWQFAQAVRGLADGCVALGIPVTGGNVSFYNQTGSAAILPTPVVGVLGVLDDVSRRLPTALGAEPGETLMLLGETRDEFDGSVWAQVTADHLGGLPPKVDLAREKLLAEVLRAASRDGLVSAAHDLSEGGLAQAVVEAALAGETGCRIVLPEDADPFVTLFSESAGRVLVAVPRTEESRFRSMCEARGLPAVRIGVVDQASDEVEVQGLFTVSLAELRQTSESVLPRLFG.

Polar residues predominate over residues 1-13; that stretch reads MTVSPTSAPTQAI. The tract at residues 1-32 is disordered; that stretch reads MTVSPTSAPTQAIDTVERAATTPDEPQPFGEL. H65 is a catalytic residue. Y68 and K112 together coordinate ATP. Residue E114 coordinates Mg(2+). Residues 115–118 and R137 each bind substrate; that span reads SHNH. The Proton acceptor role is filled by H116. D138 contributes to the Mg(2+) binding site. Q263 serves as a coordination point for substrate. D291 lines the Mg(2+) pocket. 335–337 contributes to the substrate binding site; that stretch reads ESQ. 2 residues coordinate ATP: N523 and G560. N561 contributes to the Mg(2+) binding site. S563 is a binding site for substrate.

Belongs to the FGAMS family. Monomer. Part of the FGAM synthase complex composed of 1 PurL, 1 PurQ and 2 PurS subunits.

Its subcellular location is the cytoplasm. It carries out the reaction N(2)-formyl-N(1)-(5-phospho-beta-D-ribosyl)glycinamide + L-glutamine + ATP + H2O = 2-formamido-N(1)-(5-O-phospho-beta-D-ribosyl)acetamidine + L-glutamate + ADP + phosphate + H(+). Its pathway is purine metabolism; IMP biosynthesis via de novo pathway; 5-amino-1-(5-phospho-D-ribosyl)imidazole from N(2)-formyl-N(1)-(5-phospho-D-ribosyl)glycinamide: step 1/2. Functionally, part of the phosphoribosylformylglycinamidine synthase complex involved in the purines biosynthetic pathway. Catalyzes the ATP-dependent conversion of formylglycinamide ribonucleotide (FGAR) and glutamine to yield formylglycinamidine ribonucleotide (FGAM) and glutamate. The FGAM synthase complex is composed of three subunits. PurQ produces an ammonia molecule by converting glutamine to glutamate. PurL transfers the ammonia molecule to FGAR to form FGAM in an ATP-dependent manner. PurS interacts with PurQ and PurL and is thought to assist in the transfer of the ammonia molecule from PurQ to PurL. The sequence is that of Phosphoribosylformylglycinamidine synthase subunit PurL from Mycobacterium avium (strain 104).